A 799-amino-acid chain; its full sequence is Protein translocase subunit SecA 1 (799 aa).

ATP-binding positions include Gln85, 103–107 (GEGKT), and Asp504.

The protein belongs to the SecA family. Monomer and homodimer. Part of the essential Sec protein translocation apparatus which comprises SecA, SecYEG and auxiliary proteins SecDF. Other proteins may also be involved.

Its subcellular location is the cell membrane. The protein localises to the cytoplasm. It catalyses the reaction ATP + H2O + cellular proteinSide 1 = ADP + phosphate + cellular proteinSide 2.. Functionally, part of the Sec protein translocase complex. Interacts with the SecYEG preprotein conducting channel. Has a central role in coupling the hydrolysis of ATP to the transfer of proteins into and across the cell membrane, serving as an ATP-driven molecular motor driving the stepwise translocation of polypeptide chains across the membrane. The polypeptide is Protein translocase subunit SecA 1 (Lactobacillus johnsonii (strain CNCM I-12250 / La1 / NCC 533)).